The following is a 317-amino-acid chain: Melanocyte-stimulating hormone receptor (317 aa).

Residues methionine 1–glutamate 37 lie on the Extracellular side of the membrane. An N-linked (GlcNAc...) asparagine glycan is attached at asparagine 29. Residues valine 38–isoleucine 63 form a helical membrane-spanning segment. At alanine 64–proline 72 the chain is on the cytoplasmic side. A helical transmembrane segment spans residues methionine 73 to leucine 93. Topologically, residues glutamate 94 to asparagine 118 are extracellular. The chain crosses the membrane as a helical span at residues valine 119–valine 140. The Cytoplasmic portion of the chain corresponds to aspartate 141–arginine 163. Residues valine 164–cysteine 183 traverse the membrane as a helical segment. The Extracellular segment spans residues aspartate 184–serine 191. Residues leucine 192 to leucine 211 traverse the membrane as a helical segment. Over alanine 212–alanine 240 the chain is Cytoplasmic. A helical membrane pass occupies residues alanine 241–leucine 266. Topologically, residues cysteine 267 to asparagine 279 are extracellular. A helical transmembrane segment spans residues phenylalanine 280 to phenylalanine 300. Topologically, residues arginine 301–tryptophan 317 are cytoplasmic. The S-palmitoyl cysteine moiety is linked to residue cysteine 315.

Belongs to the G-protein coupled receptor 1 family. As to quaternary structure, interacts with MGRN1, but does not undergo MGRN1-mediated ubiquitination; this interaction competes with GNAS-binding and thus inhibits agonist-induced cAMP production. Interacts with OPN3; the interaction results in a decrease in MC1R-mediated cAMP signaling and ultimately a decrease in melanin production in melanocytes.

It localises to the cell membrane. Its function is as follows. Receptor for MSH (alpha, beta and gamma) and ACTH. The activity of this receptor is mediated by G proteins which activate adenylate cyclase. Mediates melanogenesis, the production of eumelanin (black/brown) and phaeomelanin (red/yellow), via regulation of cAMP signaling in melanocytes. The chain is Melanocyte-stimulating hormone receptor (MC1R) from Trachypithecus auratus (Javan langur).